A 356-amino-acid chain; its full sequence is S-adenosylmethionine:tRNA ribosyltransferase-isomerase (356 aa).

The protein belongs to the QueA family. Monomer.

It localises to the cytoplasm. The enzyme catalyses 7-aminomethyl-7-carbaguanosine(34) in tRNA + S-adenosyl-L-methionine = epoxyqueuosine(34) in tRNA + adenine + L-methionine + 2 H(+). Its pathway is tRNA modification; tRNA-queuosine biosynthesis. Its function is as follows. Transfers and isomerizes the ribose moiety from AdoMet to the 7-aminomethyl group of 7-deazaguanine (preQ1-tRNA) to give epoxyqueuosine (oQ-tRNA). The sequence is that of S-adenosylmethionine:tRNA ribosyltransferase-isomerase from Yersinia pestis.